A 329-amino-acid polypeptide reads, in one-letter code: GMP reductase (329 aa).

The active-site Thioimidate intermediate is the Cys-178. Val-207–Val-230 is a binding site for NADP(+).

This sequence belongs to the IMPDH/GMPR family. GuaC type 2 subfamily.

It carries out the reaction IMP + NH4(+) + NADP(+) = GMP + NADPH + 2 H(+). Catalyzes the irreversible NADPH-dependent deamination of GMP to IMP. It functions in the conversion of nucleobase, nucleoside and nucleotide derivatives of G to A nucleotides, and in maintaining the intracellular balance of A and G nucleotides. This is GMP reductase from Lactococcus lactis subsp. cremoris (strain MG1363).